We begin with the raw amino-acid sequence, 201 residues long: MAKTKTGIFSGSFNPIHIGHLALANYLCEFEGLDEVWFMVTPHNPFKNQADLWPDELRLQLVQLAIEGYPRFRVSDFEFHLPRPSYTIHTLNRLKQEYPEREFQLIIGSDNWMVFDRWFESERIVSENKILVYPRPGFSVDKSQLPPNVHVADSPIFEISSTFIREALATGKDIRYFLHPAVYKRIIQQTDSIDSSHSCHT.

This sequence belongs to the NadD family.

It catalyses the reaction nicotinate beta-D-ribonucleotide + ATP + H(+) = deamido-NAD(+) + diphosphate. Its pathway is cofactor biosynthesis; NAD(+) biosynthesis; deamido-NAD(+) from nicotinate D-ribonucleotide: step 1/1. Its function is as follows. Catalyzes the reversible adenylation of nicotinate mononucleotide (NaMN) to nicotinic acid adenine dinucleotide (NaAD). This is Probable nicotinate-nucleotide adenylyltransferase from Bacteroides fragilis (strain YCH46).